Reading from the N-terminus, the 250-residue chain is DNA repair protein RecO (250 aa).

Belongs to the RecO family.

Its function is as follows. Involved in DNA repair and RecF pathway recombination. The polypeptide is DNA repair protein RecO (Staphylococcus aureus (strain COL)).